The sequence spans 411 residues: Carbohydrate sulfotransferase 5 (411 aa).

The Cytoplasmic portion of the chain corresponds to 1–30 (MGMRARVPKVAHSTRRPPAARMWLPRFSSK). The chain crosses the membrane as a helical; Signal-anchor for type II membrane protein span at residues 31 to 48 (TVTVLLLAQTTCLLLFII). Topologically, residues 49 to 411 (SRPGPSSPAG…PDHFSWASPD (363 aa)) are lumenal. A 3'-phosphoadenylyl sulfate-binding site is contributed by 71–77 (WRSGSSF). N-linked (GlcNAc...) asparagine glycosylation occurs at N138. 224-232 (RDPRAVLRS) contacts 3'-phosphoadenylyl sulfate. N-linked (GlcNAc...) asparagine glycans are attached at residues N327 and N350.

It belongs to the sulfotransferase 1 family. Gal/GlcNAc/GalNAc subfamily. As to expression, predominantly expressed in small and large intestines and colon. Weakly expressed in lymphocytes. Not expressed in other tissues. Down-regulated in colonic adenocarcinomas.

It is found in the golgi apparatus membrane. Functionally, sulfotransferase that utilizes 3'-phospho-5'-adenylyl sulfate (PAPS) as sulfonate donor to catalyze the transfer of sulfate to position 6 of non-reducing N-acetylglucosamine (GlcNAc) residues and O-linked sugars of mucin-type acceptors. Acts on the non-reducing terminal GlcNAc of short carbohydrate substrates. However, it does not transfer sulfate to longer carbohydrate substrates that have poly-N-acetyllactosamine structures. Has no activity toward keratan. Not involved in generating HEV-expressed ligands for SELL. Its substrate specificity may be influenced by its subcellular location. The sequence is that of Carbohydrate sulfotransferase 5 (CHST5) from Homo sapiens (Human).